Here is a 201-residue protein sequence, read N- to C-terminus: Female-specific protein transformer (201 aa).

Positions methionine 1–arginine 117 are disordered. Residues serine 9–arginine 37 are compositionally biased toward basic and acidic residues. Basic residues-rich tracts occupy residues asparagine 38–serine 62 and lysine 99–threonine 115.

Its subcellular location is the nucleus speckle. In terms of biological role, member of the regulatory pathway controlling female somatic sexual differentiation, regulated by Sxl. Activates dsx female-specific splicing by promoting the formation of a splicing enhancer complex which consists of tra, tra2 and sr proteins. The chain is Female-specific protein transformer (tra) from Drosophila hydei (Fruit fly).